A 445-amino-acid chain; its full sequence is Tripartite motif-containing protein 43B (445 aa).

The RING-type zinc-finger motif lies at 16 to 57 (CSICQGIFMNPVYLKCGHKFCEACLLLFQEDIKFPAYCPMCM). A B box-type zinc finger spans residues 88–129 (SEEHKCVTHKAKKMIFCDKSKILLCHLCSDSQEHSGHTHCSI). Zn(2+) is bound by residues Cys-93, His-96, Cys-115, and His-121. A B30.2/SPRY domain is found at 271–445 (RLRAHSIPGL…VRPFFSAVYT (175 aa)).

Belongs to the TRIM/RBCC family.

The protein is Tripartite motif-containing protein 43B of Mus musculus (Mouse).